Here is a 452-residue protein sequence, read N- to C-terminus: Tubulin alpha-1D chain (452 aa).

An MREC motif motif is present at residues 1 to 4 (MREC). GTP is bound at residue Gln11. Residue Lys40 is modified to N6-acetyllysine. Residues Glu71, Ser140, Gly144, Thr145, Thr179, Asn206, and Asn228 each coordinate GTP. Glu71 contributes to the Mg(2+) binding site. The active site involves Glu254. Tyr282 is subject to 3'-nitrotyrosine. The tract at residues 432-452 (YEEVGMDSVEGEGEEEEGDEY) is disordered. Ser439 carries the post-translational modification Phosphoserine. A 5-glutamyl polyglutamate modification is found at Glu446. The residue at position 452 (Tyr452) is a 3'-nitrotyrosine.

It belongs to the tubulin family. As to quaternary structure, dimer of alpha and beta chains. A typical microtubule is a hollow water-filled tube with an outer diameter of 25 nm and an inner diameter of 15 nM. Alpha-beta heterodimers associate head-to-tail to form protofilaments running lengthwise along the microtubule wall with the beta-tubulin subunit facing the microtubule plus end conferring a structural polarity. Microtubules usually have 13 protofilaments but different protofilament numbers can be found in some organisms and specialized cells. Mg(2+) serves as cofactor. Post-translationally, some glutamate residues at the C-terminus are polyglycylated, resulting in polyglycine chains on the gamma-carboxyl group. Glycylation is mainly limited to tubulin incorporated into axonemes (cilia and flagella) whereas glutamylation is prevalent in neuronal cells, centrioles, axonemes, and the mitotic spindle. Both modifications can coexist on the same protein on adjacent residues, and lowering polyglycylation levels increases polyglutamylation, and reciprocally. Cilia and flagella glycylation is required for their stability and maintenance. Flagella glycylation controls sperm motility. Some glutamate residues at the C-terminus are polyglutamylated, resulting in polyglutamate chains on the gamma-carboxyl group. Polyglutamylation plays a key role in microtubule severing by spastin (SPAST). SPAST preferentially recognizes and acts on microtubules decorated with short polyglutamate tails: severing activity by SPAST increases as the number of glutamates per tubulin rises from one to eight, but decreases beyond this glutamylation threshold. Glutamylation is also involved in cilia motility. In terms of processing, acetylation of alpha chains at Lys-40 is located inside the microtubule lumen. This modification has been correlated with increased microtubule stability, intracellular transport and ciliary assembly. Post-translationally, methylation of alpha chains at Lys-40 is found in mitotic microtubules and is required for normal mitosis and cytokinesis contributing to genomic stability. Nitration of Tyr-452 is irreversible and interferes with normal dynein intracellular distribution. In terms of processing, undergoes a tyrosination/detyrosination cycle, the cyclic removal and re-addition of a C-terminal tyrosine residue by the enzymes tubulin tyrosine carboxypeptidase (MATCAP, VASH1 or VASH2) and tubulin tyrosine ligase (TTL), respectively. Post-translationally, tyrosination promotes microtubule interaction with CAP-Gly domain-containing proteins such as CLIP1, CLIP2 and DCTN1. Tyrosination regulates the initiation of dynein-dynactin motility via interaction with DCTN1, which brings the dynein-dynactin complex into contact with microtubules. In neurons, tyrosinated tubulins mediate the initiation of retrograde vesicle transport. Detyrosination is involved in metaphase plate congression by guiding chromosomes during mitosis: detyrosination promotes interaction with CENPE, promoting pole-proximal transport of chromosomes toward the equator. Detyrosination increases microtubules-dependent mechanotransduction in dystrophic cardiac and skeletal muscle. In cardiomyocytes, detyrosinated microtubules are required to resist to contractile compression during contraction: detyrosination promotes association with desmin (DES) at force-generating sarcomeres, leading to buckled microtubules and mechanical resistance to contraction.

The protein localises to the cytoplasm. It localises to the cytoskeleton. It catalyses the reaction GTP + H2O = GDP + phosphate + H(+). Its function is as follows. Tubulin is the major constituent of microtubules, a cylinder consisting of laterally associated linear protofilaments composed of alpha- and beta-tubulin heterodimers. Microtubules grow by the addition of GTP-tubulin dimers to the microtubule end, where a stabilizing cap forms. Below the cap, tubulin dimers are in GDP-bound state, owing to GTPase activity of alpha-tubulin. The sequence is that of Tubulin alpha-1D chain (TUBA1D) from Bos taurus (Bovine).